A 676-amino-acid polypeptide reads, in one-letter code: Protein TAPT1 homolog (676 aa).

Positions 1–44 (MNATLNSAGGKRQLRFRGDVTGSRVEELHHQQQEEQKQKAPLAQ) are disordered. Positions 24–38 (RVEELHHQQQEEQKQ) are enriched in basic and acidic residues. 6 helical membrane-spanning segments follow: residues 128–148 (SFLY…WALV), 170–190 (EICD…MLLV), 249–269 (VLTH…LIMF), 346–366 (FCVM…IDWV), 414–434 (GFIP…AVSF), and 437–457 (LAAW…RICL). Residues 625–676 (SGDGVTSAKAKKATQRLPKRTHKRSESEPGMPSMVEKGGAAGIAGGNQTTQL) are disordered. Residues 633 to 647 (KAKKATQRLPKRTHK) are compositionally biased toward basic residues.

Belongs to the TAPT1 family.

The protein localises to the membrane. In Drosophila melanogaster (Fruit fly), this protein is Protein TAPT1 homolog.